We begin with the raw amino-acid sequence, 218 residues long: Oxidoreductase claN (218 aa).

NADP(+)-binding residues include lysine 38, aspartate 57, and asparagine 82. Serine 134 (proton donor) is an active-site residue. NADP(+) contacts are provided by tyrosine 148, lysine 152, and threonine 183. The Proton acceptor role is filled by tyrosine 148. Lysine 152 (lowers pKa of active site Tyr) is an active-site residue.

The protein belongs to the short-chain dehydrogenases/reductases (SDR) family.

It participates in pigment biosynthesis. In terms of biological role, oxidoreductase; part of the gene cluster that mediates the biosynthesis of the bianthraquinone cladofulvin, a conidial pigment not required for virulence but that plays a role in fitness and resistance to environmental stresses including UV light and low-temperature stress. The pathway begins with the synthesis of atrochrysone thioester by the polyketide synthase (PKS) claG. The atrochrysone carboxyl ACP thioesterase claF then breaks the thioester bond and releases the atrochrysone carboxylic acid from claG. This compound is decarboxylated by claH to yield emodin, which is further converted to chrysophanol hydroquinone by the reductase claC and the dehydratase claB. The cytochrome P450 monooxygenase claM then catalyzes the dimerization of nataloe-emodin to cladofulvin. The sequence is that of Oxidoreductase claN from Passalora fulva (Tomato leaf mold).